Here is an 84-residue protein sequence, read N- to C-terminus: Omega-conotoxin-like ArMKLT1-02 (84 aa).

Positions 1 to 22 (MKVTCMMIVAVLFLTAWTFVTA) are cleaved as a signal peptide. Residues 23-51 (DDSISALEDLFAKAHDKMENSEASPLNER) constitute a propeptide that is removed on maturation. Cystine bridges form between C53–C71, C60–C75, and C70–C79.

Belongs to the conotoxin O1 superfamily. In terms of tissue distribution, expressed by the venom duct.

It is found in the secreted. Functionally, omega-conotoxins act at presynaptic membranes, they bind and block voltage-gated calcium channels (Cav). The polypeptide is Omega-conotoxin-like ArMKLT1-02 (Conus arenatus (Sand-dusted cone)).